A 500-amino-acid chain; its full sequence is NAD(P)H-quinone oxidoreductase chain 4, chloroplastic (500 aa).

The next 13 membrane-spanning stretches (helical) occupy residues 4–24 (FPWLTIIVVFPIFAGSLIFFL), 35–55 (YTICICILELLLTTYAFCYHF), 87–107 (IGPILLTGFITTLATLAAWPV), 134–154 (LLLFFIMWELELIPVYLLLAM), 167–187 (FILYTAGGSVFLLMGVLGVAL), 208–228 (VLEIIFYIGFFIAFAVKSPII), 242–262 (HYSTCMLLAGILLKMGAYGLI), 272–292 (AHSIFSPWLMIIGTIQIIYAA), 305–325 (IAYPSVSHMGFIIIGISSLTD), 330–350 (GALLQIISHGFIGAALFFLAG), 386–406 (LALPGMSGFVAELIVFFGIIT), 411–431 (LLIPKLLITFVMAIGIILTPI), and 462–482 (LFLSISIFLPVIGIGIYPDFV).

This sequence belongs to the complex I subunit 4 family.

Its subcellular location is the plastid. The protein resides in the chloroplast thylakoid membrane. The enzyme catalyses a plastoquinone + NADH + (n+1) H(+)(in) = a plastoquinol + NAD(+) + n H(+)(out). The catalysed reaction is a plastoquinone + NADPH + (n+1) H(+)(in) = a plastoquinol + NADP(+) + n H(+)(out). In Solanum tuberosum (Potato), this protein is NAD(P)H-quinone oxidoreductase chain 4, chloroplastic.